Here is a 399-residue protein sequence, read N- to C-terminus: Yellow-related salivary protein LJM11 (399 aa).

The first 18 residues, 1-18, serve as a signal peptide directing secretion; sequence MKVFFSIFTLVLFQGTLG. Cys-115 and Cys-186 are oxidised to a cystine. The N-linked (GlcNAc...) asparagine glycan is linked to Asn-213. A disulfide bridge links Cys-319 with Cys-395. Residues Thr-345, Asn-360, and Phe-362 each contribute to the serotonin site.

The protein belongs to the major royal jelly protein family. Salivary gland (at protein level).

It is found in the secreted. Functionally, probably modulates blood feeding of sand flies on vertebrate species by binding and sequestering different mediators involved in the host response. Binds biogenic amines. Binds serotonin with high affinity. Binds adrenaline and noradrenaline. Binds dopamine and octopamine. Poorly binds histamine. Induces a delayed type hypersensitivity response in host tissues. Induces systemic Th1 immune response in the host. Immunogenic; elicits antibody production in the host. Functions as a chemoattractant for host neutrophils; likely acts through a G-protein-coupled receptor and effect is dependent on calcium influx. In terms of biological role, (Microbial infection) Modulates infection caused by Leishmania species in the host. The sequence is that of Yellow-related salivary protein LJM11 from Lutzomyia longipalpis (Sand fly).